The primary structure comprises 264 residues: Thymidylate synthase (264 aa).

Arginine 21 lines the dUMP pocket. Histidine 51 provides a ligand contact to (6R)-5,10-methylene-5,6,7,8-tetrahydrofolate. 126 to 127 is a binding site for dUMP; that stretch reads RR. Cysteine 146 acts as the Nucleophile in catalysis. Residues 166-169, asparagine 177, and 207-209 contribute to the dUMP site; these read RSCD and HLY. Aspartate 169 lines the (6R)-5,10-methylene-5,6,7,8-tetrahydrofolate pocket. Alanine 263 is a binding site for (6R)-5,10-methylene-5,6,7,8-tetrahydrofolate.

It belongs to the thymidylate synthase family. Bacterial-type ThyA subfamily. As to quaternary structure, homodimer.

It localises to the cytoplasm. It catalyses the reaction dUMP + (6R)-5,10-methylene-5,6,7,8-tetrahydrofolate = 7,8-dihydrofolate + dTMP. It participates in pyrimidine metabolism; dTTP biosynthesis. In terms of biological role, catalyzes the reductive methylation of 2'-deoxyuridine-5'-monophosphate (dUMP) to 2'-deoxythymidine-5'-monophosphate (dTMP) while utilizing 5,10-methylenetetrahydrofolate (mTHF) as the methyl donor and reductant in the reaction, yielding dihydrofolate (DHF) as a by-product. This enzymatic reaction provides an intracellular de novo source of dTMP, an essential precursor for DNA biosynthesis. The chain is Thymidylate synthase from Edwardsiella ictaluri (strain 93-146).